We begin with the raw amino-acid sequence, 345 residues long: NADPH-dependent curcumin reductase (345 aa).

Basic residues predominate over residues 1 to 10 (MGQQKQRNRR). Residues 1-24 (MGQQKQRNRRWVLASRPHGAPVPE) are disordered. The NADP(+) site is built by Lys186, Asn225, and Asn333.

As to quaternary structure, homodimer.

The catalysed reaction is tetrahydrocurcumin + 2 NADP(+) = curcumin + 2 NADPH + 2 H(+). It carries out the reaction tetrahydrocurcumin + NADP(+) = dihydrocurcumin + NADPH + H(+). The enzyme catalyses dihydrocurcumin + NADP(+) = curcumin + NADPH + H(+). Its activity is regulated as follows. Inhibited by thiol-specific reagents (p-chloromercuribenzoate and 5,5'-dithio-bis-2-nitrobenzoate). Catalyzes the metal-independent reduction of curcumin to dihydrocurcumin (DHC) as an intermediate product, followed by further reduction to tetrahydrocurcumin (THC) as an end product. It also acts on 3-octene-2-one, 3-hepten-2-one, resveratrol, and trans-2-octenal. This chain is NADPH-dependent curcumin reductase, found in Escherichia coli (strain K12).